The sequence spans 377 residues: Prostaglandin reductase-3 (377 aa).

Residue lysine 35 is modified to N6-acetyllysine. NADP(+)-binding residues include threonine 185, serine 205, lysine 209, tyrosine 224, serine 247, isoleucine 269, and tyrosine 275. Residue serine 299 is modified to Phosphoserine. NADP(+)-binding positions include 303-305 (FFL) and asparagine 361.

Belongs to the zinc-containing alcohol dehydrogenase family. Quinone oxidoreductase subfamily. Widely expressed.

It localises to the peroxisome. The catalysed reaction is 13,14-dihydro-15-oxo-prostaglandin E2 + NADP(+) = 15-oxoprostaglandin E2 + NADPH + H(+). It catalyses the reaction 13,14-dihydro-15-oxo-prostaglandin E1 + NADP(+) = 15-oxoprostaglandin E1 + NADPH + H(+). It carries out the reaction 13,14-dihydro-15-oxo-PGF2alpha + NADP(+) = 15-oxoprostaglandin F2alpha + NADPH + H(+). The enzyme catalyses 13,14-dihydro-15-oxo-prostaglandin F1alpha + NADP(+) = 15-oxoprostaglandin F1alpha + NADPH + H(+). Its function is as follows. Functions as 15-oxo-prostaglandin 13-reductase and acts on 15-keto-PGE1, 15-keto-PGE2, 15-keto-PGE1-alpha and 15-keto-PGE2-alpha with highest efficiency towards 15-keto-PGE2-alpha. Overexpression represses transcriptional activity of PPARG and inhibits adipocyte differentiation. The sequence is that of Prostaglandin reductase-3 from Mus musculus (Mouse).